The following is a 439-amino-acid chain: UPF0597 protein Dalk_4447 (439 aa).

Belongs to the UPF0597 family.

In Desulfatibacillum aliphaticivorans, this protein is UPF0597 protein Dalk_4447.